The chain runs to 218 residues: Orotate phosphoribosyltransferase (218 aa).

A 5-phospho-alpha-D-ribose 1-diphosphate-binding site is contributed by Lys-26. 34–35 lines the orotate pocket; the sequence is FF. Residues 72–73, Arg-99, Lys-100, Lys-103, His-105, and 124–132 contribute to the 5-phospho-alpha-D-ribose 1-diphosphate site; these read YK and DDVITAGTA. Residues Thr-128 and Arg-156 each coordinate orotate.

Belongs to the purine/pyrimidine phosphoribosyltransferase family. PyrE subfamily. Homodimer. It depends on Mg(2+) as a cofactor.

It catalyses the reaction orotidine 5'-phosphate + diphosphate = orotate + 5-phospho-alpha-D-ribose 1-diphosphate. The protein operates within pyrimidine metabolism; UMP biosynthesis via de novo pathway; UMP from orotate: step 1/2. In terms of biological role, catalyzes the transfer of a ribosyl phosphate group from 5-phosphoribose 1-diphosphate to orotate, leading to the formation of orotidine monophosphate (OMP). The chain is Orotate phosphoribosyltransferase from Hamiltonella defensa subsp. Acyrthosiphon pisum (strain 5AT).